Here is a 514-residue protein sequence, read N- to C-terminus: Maturase K (514 aa).

Belongs to the intron maturase 2 family. MatK subfamily.

It localises to the plastid. The protein resides in the chloroplast. Its function is as follows. Usually encoded in the trnK tRNA gene intron. Probably assists in splicing its own and other chloroplast group II introns. The polypeptide is Maturase K (Dioon spinulosum (Gum palm)).